A 210-amino-acid polypeptide reads, in one-letter code: Orotate phosphoribosyltransferase (210 aa).

Lys-26 contacts 5-phospho-alpha-D-ribose 1-diphosphate. 34 to 35 (FF) contacts orotate. 5-phospho-alpha-D-ribose 1-diphosphate-binding positions include 72–73 (YK), Arg-98, Lys-99, Lys-102, His-104, and 123–131 (DDVITAGTA). 2 residues coordinate orotate: Thr-127 and Arg-155.

It belongs to the purine/pyrimidine phosphoribosyltransferase family. PyrE subfamily. As to quaternary structure, homodimer. It depends on Mg(2+) as a cofactor.

The catalysed reaction is orotidine 5'-phosphate + diphosphate = orotate + 5-phospho-alpha-D-ribose 1-diphosphate. It functions in the pathway pyrimidine metabolism; UMP biosynthesis via de novo pathway; UMP from orotate: step 1/2. Its function is as follows. Catalyzes the transfer of a ribosyl phosphate group from 5-phosphoribose 1-diphosphate to orotate, leading to the formation of orotidine monophosphate (OMP). The chain is Orotate phosphoribosyltransferase from Legionella pneumophila (strain Paris).